The sequence spans 346 residues: UDP-N-acetylenolpyruvoylglucosamine reductase (346 aa).

Residues 22–194 form the FAD-binding PCMH-type domain; that stretch reads GFDVRARFAC…TSVTFRLPKV (173 aa). Arginine 170 is an active-site residue. Residue serine 246 is the Proton donor of the active site. Residue glutamate 342 is part of the active site.

The protein belongs to the MurB family. Requires FAD as cofactor.

The protein localises to the cytoplasm. It catalyses the reaction UDP-N-acetyl-alpha-D-muramate + NADP(+) = UDP-N-acetyl-3-O-(1-carboxyvinyl)-alpha-D-glucosamine + NADPH + H(+). It participates in cell wall biogenesis; peptidoglycan biosynthesis. Cell wall formation. The chain is UDP-N-acetylenolpyruvoylglucosamine reductase from Paraburkholderia xenovorans (strain LB400).